A 344-amino-acid chain; its full sequence is UDP-3-O-acylglucosamine N-acyltransferase (344 aa).

The active-site Proton acceptor is His248.

It belongs to the transferase hexapeptide repeat family. LpxD subfamily. As to quaternary structure, homotrimer.

It catalyses the reaction a UDP-3-O-[(3R)-3-hydroxyacyl]-alpha-D-glucosamine + a (3R)-hydroxyacyl-[ACP] = a UDP-2-N,3-O-bis[(3R)-3-hydroxyacyl]-alpha-D-glucosamine + holo-[ACP] + H(+). It participates in bacterial outer membrane biogenesis; LPS lipid A biosynthesis. Functionally, catalyzes the N-acylation of UDP-3-O-acylglucosamine using 3-hydroxyacyl-ACP as the acyl donor. Is involved in the biosynthesis of lipid A, a phosphorylated glycolipid that anchors the lipopolysaccharide to the outer membrane of the cell. The sequence is that of UDP-3-O-acylglucosamine N-acyltransferase from Synechocystis sp. (strain ATCC 27184 / PCC 6803 / Kazusa).